Here is a 268-residue protein sequence, read N- to C-terminus: Bis(5'-nucleosyl)-tetraphosphatase, symmetrical (268 aa).

Belongs to the Ap4A hydrolase family.

It catalyses the reaction P(1),P(4)-bis(5'-adenosyl) tetraphosphate + H2O = 2 ADP + 2 H(+). Its function is as follows. Hydrolyzes diadenosine 5',5'''-P1,P4-tetraphosphate to yield ADP. The chain is Bis(5'-nucleosyl)-tetraphosphatase, symmetrical from Nitrosomonas europaea (strain ATCC 19718 / CIP 103999 / KCTC 2705 / NBRC 14298).